We begin with the raw amino-acid sequence, 151 residues long: Large ribosomal subunit protein uL13 (151 aa).

The protein belongs to the universal ribosomal protein uL13 family. In terms of assembly, part of the 50S ribosomal subunit.

Functionally, this protein is one of the early assembly proteins of the 50S ribosomal subunit, although it is not seen to bind rRNA by itself. It is important during the early stages of 50S assembly. This Synechococcus sp. (strain JA-2-3B'a(2-13)) (Cyanobacteria bacterium Yellowstone B-Prime) protein is Large ribosomal subunit protein uL13.